The chain runs to 30 residues: VIGGDECNINEHRFLVALYDPDGFLSGGIL.

One can recognise a Peptidase S1 domain in the interval 1-30; that stretch reads VIGGDECNINEHRFLVALYDPDGFLSGGIL.

This sequence belongs to the peptidase S1 family. Snake venom subfamily. Monomer. Post-translationally, N-Glycosylated. In terms of tissue distribution, expressed by the venom gland.

The protein resides in the secreted. Inhibited by diisopropylfluorophosphate (DFP). Its function is as follows. Snake venom serine protease that catalyzes the hydrolysis of arginine esters, kallikrein substrates Pro-Phe-Arg-MCA and Z-Phe-Arg-MCA. Cleaves kininogen analogs to release bradykinin. Induces contraction of the isolated rat uterus directly at high concentrations, but provokes more forceful contractions when injected in presence of bovine plasma. Shows capillary permeability-increasing activity and hypotensive activity on the anesthetized rat. This chain is Snake venom serine protease, found in Crotalus viridis viridis (Prairie rattlesnake).